The sequence spans 402 residues: Type II NADH:quinone oxidoreductase (402 aa).

Residues 12–16 (GAGYA), 39–40 (NK), and valine 83 contribute to the FAD site. Glutamate 172 is a catalytic residue. FAD is bound by residues aspartate 302, 319 to 320 (AQ), and lysine 379.

This sequence belongs to the NADH dehydrogenase family. Homodimer in solution. Forms homotetramers; dimer of dimers. Requires FAD as cofactor.

It localises to the cell membrane. The enzyme catalyses a quinone + NADH + H(+) = a quinol + NAD(+). The catalysed reaction is a menaquinone + NADH + H(+) = a menaquinol + NAD(+). It catalyses the reaction a ubiquinone + NADH + H(+) = a ubiquinol + NAD(+). Its activity is regulated as follows. Inhibited by HQNO, a quinone derivative. Its function is as follows. Alternative, nonproton pumping NADH:quinone oxidoreductase that delivers electrons to the respiratory chain by oxidation of NADH and reduction of quinones, and contributes to the regeneration of NAD(+). Can use DMN, a menaquinone analog, 2,3-dimethoxy-5,6-dimethyl-benzoquinone (DDB), an ubiquinone analog, or 2,3,5,6-tetramethyl-1,4-benzoquinone (Duroquinone, DQ) a plastoquinone analog as electron acceptors. This is Type II NADH:quinone oxidoreductase from Staphylococcus aureus (strain NCTC 8325 / PS 47).